Consider the following 117-residue polypeptide: Small ribosomal subunit protein bS6m (117 aa).

This sequence belongs to the bacterial ribosomal protein bS6 family. Component of the mitochondrial small ribosomal subunit (mt-SSU). Mature N.crassa 74S mitochondrial ribosomes consist of a small (37S) and a large (54S) subunit. The 37S small subunit contains a 16S ribosomal RNA (16S mt-rRNA) and 32 different proteins. The 54S large subunit contains a 23S rRNA (23S mt-rRNA) and 42 different proteins.

It is found in the mitochondrion. In terms of biological role, component of the mitochondrial ribosome (mitoribosome), a dedicated translation machinery responsible for the synthesis of mitochondrial genome-encoded proteins, including at least some of the essential transmembrane subunits of the mitochondrial respiratory chain. The mitoribosomes are attached to the mitochondrial inner membrane and translation products are cotranslationally integrated into the membrane. This chain is Small ribosomal subunit protein bS6m (mrp17), found in Neurospora crassa (strain ATCC 24698 / 74-OR23-1A / CBS 708.71 / DSM 1257 / FGSC 987).